Consider the following 264-residue polypeptide: Thymidylate synthase (264 aa).

DUMP is bound at residue Arg21. His51 is a (6R)-5,10-methylene-5,6,7,8-tetrahydrofolate binding site. 126-127 is a binding site for dUMP; sequence RR. Residue Cys146 is the Nucleophile of the active site. DUMP contacts are provided by residues 166-169, Asn177, and 207-209; these read RSAD and HLY. Asp169 contributes to the (6R)-5,10-methylene-5,6,7,8-tetrahydrofolate binding site. Ala263 contributes to the (6R)-5,10-methylene-5,6,7,8-tetrahydrofolate binding site.

The protein belongs to the thymidylate synthase family. Bacterial-type ThyA subfamily. Homodimer.

The protein resides in the cytoplasm. The catalysed reaction is dUMP + (6R)-5,10-methylene-5,6,7,8-tetrahydrofolate = 7,8-dihydrofolate + dTMP. It participates in pyrimidine metabolism; dTTP biosynthesis. In terms of biological role, catalyzes the reductive methylation of 2'-deoxyuridine-5'-monophosphate (dUMP) to 2'-deoxythymidine-5'-monophosphate (dTMP) while utilizing 5,10-methylenetetrahydrofolate (mTHF) as the methyl donor and reductant in the reaction, yielding dihydrofolate (DHF) as a by-product. This enzymatic reaction provides an intracellular de novo source of dTMP, an essential precursor for DNA biosynthesis. This is Thymidylate synthase from Polynucleobacter asymbioticus (strain DSM 18221 / CIP 109841 / QLW-P1DMWA-1) (Polynucleobacter necessarius subsp. asymbioticus).